The following is a 2149-amino-acid chain: Polyketide synthase 1 (2149 aa).

The N-terminal acylcarrier protein transacylase domain (SAT) stretch occupies residues 19 to 261; it reads FIFGDQSSCN…TRLAVHAPYH (243 aa). Residues 394 to 829 form the Ketosynthase family 3 (KS3) domain; the sequence is ESKIAIIGMS…GGNTALLVED (436 aa). Active-site for beta-ketoacyl synthase activity residues include C566, H701, and H745. Residues 929–1233 form a malonyl-CoA:ACP transacylase (MAT) domain region; the sequence is AFVFSGQGSQ…PSLMRNKDGW (305 aa). Residue S1018 is the For acyl/malonyl transferase activity of the active site. Residues 1310 to 1624 are product template (PT) domain; the sequence is TASVHRIVHE…RKVLNTAMPP (315 aa). Residues 1314–1447 form an N-terminal hotdog fold region; sequence HRIVHESVDK…SSLHFERPKV (134 aa). The region spanning 1314–1619 is the PKS/mFAS DH domain; the sequence is HRIVHESVDK…FQGIPRKVLN (306 aa). The active-site Proton acceptor; for dehydratase activity is H1346. Residues 1474 to 1619 are C-terminal hotdog fold; it reads LNSRMSSGVI…FQGIPRKVLN (146 aa). The active-site Proton donor; for dehydratase activity is D1533. The tract at residues 1619-1657 is disordered; sequence NTAMPPPKSQNEAPVRSAPAKPAAKPPKSASSEHSGHFA. A compositionally biased stretch (low complexity) spans 1635–1650; sequence SAPAKPAAKPPKSASS. The region spanning 1678–1752 is the Carrier 1 domain; the sequence is RNPMLAVFKI…DLATHLGLDT (75 aa). S1712 carries the O-(pantetheine 4'-phosphoryl)serine modification. Positions 1755-1790 are enriched in low complexity; the sequence is SDQSSGQSSSSGGLSPRSDSIGEITSSATTPPSLSP. The segment at 1755–1796 is disordered; that stretch reads SDQSSGQSSSSGGLSPRSDSIGEITSSATTPPSLSPRGSVSG. Positions 1793-1870 constitute a Carrier 2 domain; it reads SVSGSQCKDV…SFKHMFQQGH (78 aa). S1830 carries the O-(pantetheine 4'-phosphoryl)serine modification. Positions 1882-2147 are thioesterase (TE) domain; sequence LKQYRATSTL…ERVAAFIRST (266 aa). S1973 serves as the catalytic For thioesterase activity.

Polyketide synthase; part of the Pks1 gene cluster that mediates the biosynthesis of an anthraquinone derivative pigment that contributes to conidial pigmentation that provides protection from UV radiation, heat and cold stress. The polyketide synthase Pks1 produces 1-acetyl-2,4,6,8-tetrahydroxy-9,10-anthraquinone though condensation of acetyl-CoA with malonyl-CoA. The dehydratase EthD and the laccase Mlac1 further convert the anthraquinone derivative into the final conidial pigment. The polypeptide is Polyketide synthase 1 (Metarhizium majus (strain ARSEF 297)).